We begin with the raw amino-acid sequence, 383 residues long: ATP phosphoribosyltransferase regulatory subunit (383 aa).

It belongs to the class-II aminoacyl-tRNA synthetase family. HisZ subfamily. Heteromultimer composed of HisG and HisZ subunits.

It is found in the cytoplasm. Its pathway is amino-acid biosynthesis; L-histidine biosynthesis; L-histidine from 5-phospho-alpha-D-ribose 1-diphosphate: step 1/9. Functionally, required for the first step of histidine biosynthesis. May allow the feedback regulation of ATP phosphoribosyltransferase activity by histidine. The chain is ATP phosphoribosyltransferase regulatory subunit from Cupriavidus metallidurans (strain ATCC 43123 / DSM 2839 / NBRC 102507 / CH34) (Ralstonia metallidurans).